Reading from the N-terminus, the 137-residue chain is Ribosome-binding factor A (137 aa).

The protein belongs to the RbfA family. In terms of assembly, monomer. Binds 30S ribosomal subunits, but not 50S ribosomal subunits or 70S ribosomes.

Its subcellular location is the cytoplasm. Functionally, one of several proteins that assist in the late maturation steps of the functional core of the 30S ribosomal subunit. Associates with free 30S ribosomal subunits (but not with 30S subunits that are part of 70S ribosomes or polysomes). Required for efficient processing of 16S rRNA. May interact with the 5'-terminal helix region of 16S rRNA. The sequence is that of Ribosome-binding factor A from Synechococcus sp. (strain ATCC 27144 / PCC 6301 / SAUG 1402/1) (Anacystis nidulans).